The following is a 688-amino-acid chain: MERPDLSTIPLTPGVYLYKDESGRIIYVGKARCLRRRVASYFRDVSALTPKTVAMLRHAVTIDTLSTTTEKEALLLEASLIKKHRPRYNIVLRDDKQYVLFRIGAKHPYPRLEIVRKARRDDGRYFGPFTSASAARETWKTIHRAFPLRRCSDRAFGNRVRACLYHHMGQCLGPCVNEVPSETYAALLEQVSLLLSGRSGELVDALRTEMEAASQGLDFERAAVLRDRIRALERTVERQAAVLPGGGDLDVVGVVEVENGLALGVLFVRQGVLLDGRSFFWPGLGFAEAPELLWSFLGQFYGPQATIPPRIVVPWLPDEDGETGDALDGSSDAVVPVAAATTIDASLADVRTGTEVTSLINASHAAPNVGESTQGDTLAGATGKGATHLMLETALAALRGGIVRIALPRNPAENRLVDMAMSNAREEARRKADTPLQDLLARALHLAGPPHRIEAVDVSHTGGRNTRVGMVVFEDGKPFPEAYRTYAFEDGDGDDYGTLAAWAGRRVESGPPWPDLLLVDGGRGQLAAVVRAFEECGMGAAFAVASIAKARTEEGRADRRAGNVSDRIFLPGRANPLPLRAGAPELLFLQHVRDTVHDYSIGKHRRARAGAALTGELQRVEGIGPATARALWERFDSLQAMADAGVEGLAAVPGVGRARAAALHAHLVTFFGSSKQGGHARTALQRKG.

The GIY-YIG domain maps to 11–90 (LTPGVYLYKD…IKKHRPRYNI (80 aa)). The UVR domain occupies 200–235 (GELVDALRTEMEAASQGLDFERAAVLRDRIRALERT).

Belongs to the UvrC family. As to quaternary structure, interacts with UvrB in an incision complex.

It localises to the cytoplasm. Its function is as follows. The UvrABC repair system catalyzes the recognition and processing of DNA lesions. UvrC both incises the 5' and 3' sides of the lesion. The N-terminal half is responsible for the 3' incision and the C-terminal half is responsible for the 5' incision. The protein is UvrABC system protein C of Nitratidesulfovibrio vulgaris (strain ATCC 29579 / DSM 644 / CCUG 34227 / NCIMB 8303 / VKM B-1760 / Hildenborough) (Desulfovibrio vulgaris).